The sequence spans 109 residues: Phycoerythrin alpha-1 subunit (109 aa).

7 residues coordinate (2R,3E)-phycocyanobilin: V6, A16, F17, P20, D27, A28, and A39.

Belongs to the phycoerythrin family. In terms of assembly, heterotetramer of 2 identical alpha chains and 2 identical beta chains which form 2 alpha-beta heterodimers within the heterotetramer. The two alpha-beta heterodimers are rotated to an open configuration in contrast to the closed configuration found in other cryptophyte species due to the insertion of a single amino acid, Asp-65, in a conserved region of the alpha chain. In the open form, the central chromophores are not in physical contact but are separated by a water-filled channel. Contains three phycocyanobilin chromophores with binding mediated by both the alpha and beta subunits.

It localises to the plastid. Its subcellular location is the chloroplast thylakoid membrane. In terms of biological role, light-harvesting photosynthetic tetrapyrrole chromophore-protein from the phycobiliprotein complex. The sequence is that of Phycoerythrin alpha-1 subunit from Hemiselmis virescens.